The primary structure comprises 245 residues: 1-(5-phosphoribosyl)-5-[(5-phosphoribosylamino)methylideneamino] imidazole-4-carboxamide isomerase (245 aa).

The active-site Proton acceptor is Asp7. Asp129 serves as the catalytic Proton donor.

This sequence belongs to the HisA/HisF family.

The protein resides in the cytoplasm. It carries out the reaction 1-(5-phospho-beta-D-ribosyl)-5-[(5-phospho-beta-D-ribosylamino)methylideneamino]imidazole-4-carboxamide = 5-[(5-phospho-1-deoxy-D-ribulos-1-ylimino)methylamino]-1-(5-phospho-beta-D-ribosyl)imidazole-4-carboxamide. Its pathway is amino-acid biosynthesis; L-histidine biosynthesis; L-histidine from 5-phospho-alpha-D-ribose 1-diphosphate: step 4/9. In Aliivibrio fischeri (strain MJ11) (Vibrio fischeri), this protein is 1-(5-phosphoribosyl)-5-[(5-phosphoribosylamino)methylideneamino] imidazole-4-carboxamide isomerase.